The chain runs to 122 residues: Large ribosomal subunit protein uL14 (122 aa).

It belongs to the universal ribosomal protein uL14 family. As to quaternary structure, part of the 50S ribosomal subunit. Forms a cluster with proteins L3 and L19. In the 70S ribosome, L14 and L19 interact and together make contacts with the 16S rRNA in bridges B5 and B8.

Functionally, binds to 23S rRNA. Forms part of two intersubunit bridges in the 70S ribosome. This is Large ribosomal subunit protein uL14 from Paraburkholderia phymatum (strain DSM 17167 / CIP 108236 / LMG 21445 / STM815) (Burkholderia phymatum).